The chain runs to 120 residues: UPF0344 protein LMHCC_0278 (120 aa).

The next 4 membrane-spanning stretches (helical) occupy residues 3–23 (GYIH…ALLI), 33–53 (MLQM…IMMV), 62–82 (ILAI…EMLL), and 92–112 (GMFL…GFYL).

This sequence belongs to the UPF0344 family.

It localises to the cell membrane. This Listeria monocytogenes serotype 4a (strain HCC23) protein is UPF0344 protein LMHCC_0278.